The chain runs to 161 residues: Prs ADP-ribosylating toxin (161 aa).

This sequence belongs to the MbcT/ParT/Res family. As to quaternary structure, homodimer, forms heterotetrameric ParS(2)-ParT(2) complexes. Consumes NAD(+) and auto-ADP-ribosylates on the tryptic fragment Ala-47-Arg-66 in vitro. Also auto-ADP-ribosylates using NADP(+).

Toxic component of a type II toxin-antitoxin (TA) system. Expression in E.coli inhibits cell growth; bacteriostasis is neutralized by expression of cognate antitoxin ParS. ADP-ribosylates E.coli ribose-phosphate pyrophosphokinase (RPPK, prs) using NAD(+) in vitro; ADP-ribosylates RPPK on 'Lys-182' and 'Ser-202'. Cannot use NADP(+). Also auto-ADP-ribosylates in vitro; in the presence of RPPK auto-ADP-ribosylation decreases. The protein is Prs ADP-ribosylating toxin of Sphingobium sp. (strain YBL2).